A 358-amino-acid polypeptide reads, in one-letter code: Putative purine permease 12 (358 aa).

The next 10 membrane-spanning stretches (helical) occupy residues 29 to 49, 62 to 82, 100 to 120, 128 to 148, 153 to 173, 189 to 209, 235 to 255, 280 to 299, 300 to 316, and 320 to 340; these read WILVFISIFFLISAQAISVLL, WISTLVQTGGFPILYLPLSLL, LVWIYLSLGFAIGLDNFLYSV, STYSILCASQLAFNGVFYYYI, ITCLIFFSVLFLSISAVLVSL, LIGCFCAVFASLIYSLQLSLM, VASCVAVIGLFASGEWMLLSV, LGCVGAVSLIFLVSSLFSNL, ISTLSLIVTPLAAIAVF, and LTEVKMVAMPIAFTGFTFYIY.

The protein belongs to the purine permeases (TC 2.A.7.14) family.

The protein resides in the membrane. The protein is Putative purine permease 12 (PUP12) of Arabidopsis thaliana (Mouse-ear cress).